A 161-amino-acid polypeptide reads, in one-letter code: SsrA-binding protein (161 aa).

Belongs to the SmpB family.

Its subcellular location is the cytoplasm. Required for rescue of stalled ribosomes mediated by trans-translation. Binds to transfer-messenger RNA (tmRNA), required for stable association of tmRNA with ribosomes. tmRNA and SmpB together mimic tRNA shape, replacing the anticodon stem-loop with SmpB. tmRNA is encoded by the ssrA gene; the 2 termini fold to resemble tRNA(Ala) and it encodes a 'tag peptide', a short internal open reading frame. During trans-translation Ala-aminoacylated tmRNA acts like a tRNA, entering the A-site of stalled ribosomes, displacing the stalled mRNA. The ribosome then switches to translate the ORF on the tmRNA; the nascent peptide is terminated with the 'tag peptide' encoded by the tmRNA and targeted for degradation. The ribosome is freed to recommence translation, which seems to be the essential function of trans-translation. This Vibrio vulnificus (strain YJ016) protein is SsrA-binding protein.